Reading from the N-terminus, the 159-residue chain is Phosphopantetheine adenylyltransferase (159 aa).

Thr-10 contacts substrate. ATP contacts are provided by residues 10 to 11 (TF) and His-18. Residues Lys-42, Leu-74, and Arg-88 each coordinate substrate. Residues 89 to 91 (GLR), Glu-99, and 124 to 130 (NAFISSS) each bind ATP.

Belongs to the bacterial CoaD family. As to quaternary structure, homohexamer. Requires Mg(2+) as cofactor.

The protein resides in the cytoplasm. It carries out the reaction (R)-4'-phosphopantetheine + ATP + H(+) = 3'-dephospho-CoA + diphosphate. The protein operates within cofactor biosynthesis; coenzyme A biosynthesis; CoA from (R)-pantothenate: step 4/5. Functionally, reversibly transfers an adenylyl group from ATP to 4'-phosphopantetheine, yielding dephospho-CoA (dPCoA) and pyrophosphate. This is Phosphopantetheine adenylyltransferase from Campylobacter fetus subsp. fetus (strain 82-40).